The chain runs to 431 residues: 4-hydroxy-3-methylbut-2-en-1-yl diphosphate synthase (flavodoxin) (431 aa).

Positions 310, 313, 356, and 363 each coordinate [4Fe-4S] cluster.

Belongs to the IspG family. [4Fe-4S] cluster is required as a cofactor.

It catalyses the reaction (2E)-4-hydroxy-3-methylbut-2-enyl diphosphate + oxidized [flavodoxin] + H2O + 2 H(+) = 2-C-methyl-D-erythritol 2,4-cyclic diphosphate + reduced [flavodoxin]. It participates in isoprenoid biosynthesis; isopentenyl diphosphate biosynthesis via DXP pathway; isopentenyl diphosphate from 1-deoxy-D-xylulose 5-phosphate: step 5/6. In terms of biological role, converts 2C-methyl-D-erythritol 2,4-cyclodiphosphate (ME-2,4cPP) into 1-hydroxy-2-methyl-2-(E)-butenyl 4-diphosphate. The polypeptide is 4-hydroxy-3-methylbut-2-en-1-yl diphosphate synthase (flavodoxin) (Rhodopseudomonas palustris (strain HaA2)).